We begin with the raw amino-acid sequence, 327 residues long: Serine/threonine-protein phosphatase alpha-1 isoform (327 aa).

Mn(2+)-binding residues include aspartate 62, histidine 64, aspartate 90, and asparagine 122. Histidine 123 (proton donor) is an active-site residue. Residues histidine 171 and histidine 246 each coordinate Mn(2+). Positions glycine 308–lysine 327 are disordered. Threonine 315 is modified (phosphothreonine).

Belongs to the PPP phosphatase family. PP-1 subfamily. As to quaternary structure, interacts with Nop17l. It depends on Mn(2+) as a cofactor.

It catalyses the reaction O-phospho-L-seryl-[protein] + H2O = L-seryl-[protein] + phosphate. The enzyme catalyses O-phospho-L-threonyl-[protein] + H2O = L-threonyl-[protein] + phosphate. The sequence is that of Serine/threonine-protein phosphatase alpha-1 isoform (Pp1alpha-96A) from Drosophila melanogaster (Fruit fly).